The primary structure comprises 126 residues: Large ribosomal subunit protein bL12 (126 aa).

It belongs to the bacterial ribosomal protein bL12 family. In terms of assembly, homodimer. Part of the ribosomal stalk of the 50S ribosomal subunit. Forms a multimeric L10(L12)X complex, where L10 forms an elongated spine to which 2 to 4 L12 dimers bind in a sequential fashion. Binds GTP-bound translation factors.

Forms part of the ribosomal stalk which helps the ribosome interact with GTP-bound translation factors. Is thus essential for accurate translation. This Bordetella avium (strain 197N) protein is Large ribosomal subunit protein bL12.